Here is a 119-residue protein sequence, read N- to C-terminus: MDLIRKIEAQNKKNEAFVFNVGDTVKVVYKIIEGNNERLQSFEGIIISFQNKGIGKTFLVRKISSGIGVEKIFPVYSPIIEKVEVLRRGKVRRAKLYYMRNRIGKAAMKIKERLNFKRS.

Belongs to the bacterial ribosomal protein bL19 family.

This protein is located at the 30S-50S ribosomal subunit interface and may play a role in the structure and function of the aminoacyl-tRNA binding site. This Borreliella afzelii (strain PKo) (Borrelia afzelii) protein is Large ribosomal subunit protein bL19.